A 199-amino-acid chain; its full sequence is 5'-deoxynucleotidase YfbR (199 aa).

Substrate contacts are provided by residues 18-19 (RW) and histidine 33. The HD domain occupies 30–142 (VSEHSLQVAM…VKQADALCAY (113 aa)). A divalent metal cation is bound by residues histidine 33, histidine 68, and aspartate 69. Residues aspartate 69, 77–80 (DLPT), and aspartate 137 each bind substrate. Residue aspartate 137 coordinates a divalent metal cation.

It belongs to the 5DNU family. Homodimer. A divalent metal cation is required as a cofactor.

It is found in the cytoplasm. The enzyme catalyses a 2'-deoxyribonucleoside 5'-phosphate + H2O = a 2'-deoxyribonucleoside + phosphate. Catalyzes the strictly specific dephosphorylation of 2'-deoxyribonucleoside 5'-monophosphates. The chain is 5'-deoxynucleotidase YfbR from Shigella dysenteriae serotype 1 (strain Sd197).